Consider the following 657-residue polypeptide: PAN2-PAN3 deadenylation complex subunit PAN3 (657 aa).

Disordered regions lie at residues 1–29 (MASA…HAKD), 52–98 (HDPS…SATI), and 115–135 (SRSN…EWSI). Residues 27–55 (AKDTLCRNVTIYGRCRYEDKGCVFNHDPS) form a C3H1-type zinc finger. Basic and acidic residues predominate over residues 52-67 (HDPSRVNDAQHPERSS). 2 stretches are compositionally biased toward polar residues: residues 75–98 (DSPS…SATI) and 115–132 (SRSN…STPE). A pseudokinase domain region spans residues 259 to 521 (QTLPNSQLPT…TIDIFISGIS (263 aa)). ATP contacts are provided by residues Arg-311, 360–367 (DYHPLSKT), and 421–422 (SK). The stretch at 522–560 (SQLMSTFDSSLHLDDQLISDLSRELENARLVRLLTKLNF) forms a coiled coil. The segment at 561–657 (INERPEYEHD…QALLKPARRI (97 aa)) is knob domain.

It belongs to the protein kinase superfamily. PAN3 family. In terms of assembly, homodimer. Forms a heterotrimer with a catalytic subunit PAN2 to form the poly(A)-nuclease (PAN) deadenylation complex. Interacts (via PAM-2 motif) with poly(A)-binding protein PAB1 (via PABC domain), conferring substrate specificity of the enzyme complex.

It localises to the cytoplasm. Its function is as follows. Regulatory subunit of the poly(A)-nuclease (PAN) deadenylation complex, one of two cytoplasmic mRNA deadenylases involved in mRNA turnover. PAN specifically shortens poly(A) tails of RNA and the activity is stimulated by poly(A)-binding protein PAB1. PAN deadenylation is followed by rapid degradation of the shortened mRNA tails by the CCR4-NOT complex. Deadenylated mRNAs are then degraded by two alternative mechanisms, namely exosome-mediated 3'-5' exonucleolytic degradation, or deadenylation-dependent mRNA decaping and subsequent 5'-3' exonucleolytic degradation by XRN1. May also be involved in post-transcriptional maturation of mRNA poly(A) tails. PAN3 acts as a positive regulator for PAN activity, recruiting the catalytic subunit PAN2 to mRNA via its interaction with RNA and with PAB1. This chain is PAN2-PAN3 deadenylation complex subunit PAN3, found in Coccidioides immitis (strain RS) (Valley fever fungus).